The sequence spans 471 residues: Putative pentatricopeptide repeat-containing protein At1g53330 (471 aa).

10 PPR repeats span residues 46 to 81, 82 to 116, 117 to 147, 151 to 185, 186 to 221, 222 to 256, 257 to 291, 292 to 326, 327 to 361, and 362 to 396; these read SLLC…RIVP, TEII…RCQR, TVKS…IDEF, DACT…KVKP, TGVT…GVRP, TVHI…KIKV, DAAI…GCKP, DTVT…GLKP, DVIS…GCSP, and DTLS…GYKP.

The protein belongs to the PPR family. P subfamily.

In terms of biological role, involved during embryo development. The protein is Putative pentatricopeptide repeat-containing protein At1g53330 of Arabidopsis thaliana (Mouse-ear cress).